The primary structure comprises 335 residues: Methionine import ATP-binding protein MetN 1 (335 aa).

The 241-residue stretch at 2–242 folds into the ABC transporter domain; that stretch reads IEFQNVHKTY…PKHPTTKRFV (241 aa). 38–45 is a binding site for ATP; that stretch reads GHSGAGKS.

This sequence belongs to the ABC transporter superfamily. Methionine importer (TC 3.A.1.24) family. In terms of assembly, the complex is composed of two ATP-binding proteins (MetN), two transmembrane proteins (MetI) and a solute-binding protein (MetQ).

The protein resides in the cell inner membrane. The enzyme catalyses L-methionine(out) + ATP + H2O = L-methionine(in) + ADP + phosphate + H(+). It carries out the reaction D-methionine(out) + ATP + H2O = D-methionine(in) + ADP + phosphate + H(+). In terms of biological role, part of the ABC transporter complex MetNIQ involved in methionine import. Responsible for energy coupling to the transport system. This Pseudomonas fluorescens (strain Pf0-1) protein is Methionine import ATP-binding protein MetN 1.